The following is a 508-amino-acid chain: MLPTQAGAAAALGRGSALGGSLNRTPTGRPGGGGGTRGANGGRVPGNGAGLGPGRLEREAAAAAATTPAPTAGALYSGSEGDSESGEEEELGAERRGLKRSLSEMEIGMVVGGPEASAAATGGYGPVSGAVSGAKPGKKTRGRVKIKMEFIDNKLRRYTTFSKRKTGIMKKAYELSTLTGTQVLLLVASETGHVYTFATRKLQPMITSETGKALIQTCLNSPDSPPRSDPTTDQRMSATGFEETDLTYQVSESDSSGETKDTLKPAFTVTNLPGTTSTIQTAPSTSTTMQVSSGPSFPITNYLAPVSASVSPSAVSSANGTVLKSTGSGPVSSGGLMQLPTSFTLMPGGAVAQQVPVQAIQVHQAPQQASPSRDSSTDLTQTSSSGTVTLPATIMTSSVPTTVGGHMMYPSPHAVMYAPTSGLGDGSLTVLNAFSQAPSTMQVSHSQVQEPGGVPQVFLTASSGTVQIPVSAVQLHQMAVIGQQAGSSSNLTELQVVNLDTAHSTKSE.

Residues 1 to 28 (MLPTQAGAAAALGRGSALGGSLNRTPTG) show a composition bias toward low complexity. The segment at 1-97 (MLPTQAGAAA…EEELGAERRG (97 aa)) is disordered. Gly residues predominate over residues 29-53 (RPGGGGGTRGANGGRVPGNGAGLGP). The segment covering 61 to 80 (AAAAATTPAPTAGALYSGSE) has biased composition (low complexity). Phosphoserine is present on residues Ser-77, Ser-79, Ser-83, Ser-85, and Ser-103. A compositionally biased stretch (acidic residues) spans 81–91 (GDSESGEEEEL). A DNA-binding region spans residues 133–222 (GAKPGKKTRG…ALIQTCLNSP (90 aa)). In terms of domain architecture, MADS-box spans 141–201 (RGRVKIKMEF…GHVYTFATRK (61 aa)). The segment at 168-222 (IMKKAYELSTLTGTQVLLLVASETGHVYTFATRKLQPMITSETGKALIQTCLNSP) is involved in dimerization. Residues 219–240 (LNSPDSPPRSDPTTDQRMSATG) are disordered. Residues Ser-224 and Ser-253 each carry the phosphoserine modification. Ser-277, Ser-307, Ser-309, Ser-316, and Ser-383 each carry an O-linked (GlcNAc) serine glycan. The disordered stretch occupies residues 362–385 (VHQAPQQASPSRDSSTDLTQTSSS). A phosphoserine; by dsDNA kinase mark is found at Ser-435 and Ser-446.

As to quaternary structure, binds DNA as a multimer, probably a dimer. Interacts with MRTFA, forming the SRF-MRTFA nuclear complex which binds the 5'-CArG-3' consensus motif (CArG box) on DNA via SRF. Forms a nuclear ternary complex with MRTFA and SCAI. Interacts with MRTFB. Interacts with MLLT7/FOXO4, NKX3A and SSRP1. Interacts with ARID2. Interacts with SRFBP1. Interacts with FOXK1. Interacts with LPXN. Interacts with OLFM2; the interaction promotes dissociation of SRF from the transcriptional repressor HEY2, facilitates binding of SRF to target genes and promotes smooth muscle differentiation. Interacts with NKX3-1. Interacts with KAT5. Interacts with PURB. Post-translationally, phosphorylated by PRKDC.

The protein localises to the nucleus. In terms of biological role, SRF is a transcription factor that binds to the serum response element (SRE), a short sequence of dyad symmetry located 300 bp to the 5' of the site of transcription initiation of some genes (such as FOS). Together with MRTFA transcription coactivator, controls expression of genes regulating the cytoskeleton during development, morphogenesis and cell migration. The SRF-MRTFA complex activity responds to Rho GTPase-induced changes in cellular globular actin (G-actin) concentration, thereby coupling cytoskeletal gene expression to cytoskeletal dynamics. Required for cardiac differentiation and maturation. In Homo sapiens (Human), this protein is Serum response factor (SRF).